We begin with the raw amino-acid sequence, 293 residues long: Ribosomal protein L11 methyltransferase (293 aa).

S-adenosyl-L-methionine is bound by residues threonine 145, glycine 166, aspartate 188, and asparagine 230.

This sequence belongs to the methyltransferase superfamily. PrmA family.

It is found in the cytoplasm. The enzyme catalyses L-lysyl-[protein] + 3 S-adenosyl-L-methionine = N(6),N(6),N(6)-trimethyl-L-lysyl-[protein] + 3 S-adenosyl-L-homocysteine + 3 H(+). In terms of biological role, methylates ribosomal protein L11. The polypeptide is Ribosomal protein L11 methyltransferase (Shewanella sediminis (strain HAW-EB3)).